The chain runs to 644 residues: Replication protein E1 (644 aa).

The Nuclear localization signal motif lies at 86 to 88; the sequence is KRK. Residues 179–345 form a DNA-binding region region; the sequence is CENVTLQEIS…LTVLQHSFND (167 aa). Positions 312-644 are required for E2 binding; it reads LYWFRTAMSN…AGENTRSLRS (333 aa). The 151-residue stretch at 444 to 594 folds into the SF3 helicase domain; sequence IEFTAFLGAF…FPFDENGNPV (151 aa). 470–477 lines the ATP pocket; that stretch reads GPANTGKS. Lys-551 is covalently cross-linked (Glycyl lysine isopeptide (Lys-Gly) (interchain with G-Cter in SUMO)).

The protein belongs to the papillomaviridae E1 protein family. In terms of assembly, can form hexamers. Interacts with E2 protein; this interaction increases E1 DNA binding specificity. Interacts with host DNA polymerase subunit POLA2. Interacts with host single stranded DNA-binding protein RPA1. Interacts with host TOP1; this interaction stimulates the enzymatic activity of TOP1. Post-translationally, phosphorylated. Sumoylated.

The protein resides in the host nucleus. The catalysed reaction is Couples ATP hydrolysis with the unwinding of duplex DNA by translocating in the 3'-5' direction.. It catalyses the reaction ATP + H2O = ADP + phosphate + H(+). Its function is as follows. ATP-dependent DNA 3'-5' helicase required for initiation of viral DNA replication. It forms a complex with the viral E2 protein. The E1-E2 complex binds to the replication origin which contains binding sites for both proteins. During the initial step, a dimer of E1 interacts with a dimer of protein E2 leading to a complex that binds the viral origin of replication with high specificity. Then, a second dimer of E1 displaces the E2 dimer in an ATP-dependent manner to form the E1 tetramer. Following this, two E1 monomers are added to each half of the site, which results in the formation of two E1 trimers on the viral ori. Subsequently, two hexamers will be created. The double hexamer acts as a bi-directional helicase machinery and unwinds the viral DNA and then recruits the host DNA polymerase to start replication. The sequence is that of Replication protein E1 from Human papillomavirus 33.